The sequence spans 434 residues: Enolase (434 aa).

Substrate-binding residues include His-158 and Glu-167. Glu-210 functions as the Proton donor in the catalytic mechanism. Mg(2+) is bound by residues Asp-245, Glu-294, and Asp-319. Positions 294 and 319 each coordinate substrate. Lys-344 (proton acceptor) is an active-site residue. Residues 371–374 (SHRS) and Lys-395 contribute to the substrate site.

Belongs to the enolase family. In terms of assembly, homodimer. Requires Mg(2+) as cofactor.

The protein resides in the cytoplasm. It catalyses the reaction (2R)-2-phosphoglycerate = phosphoenolpyruvate + H2O. Its pathway is carbohydrate degradation; glycolysis; pyruvate from D-glyceraldehyde 3-phosphate: step 4/5. This Schistosoma japonicum (Blood fluke) protein is Enolase (ENO).